We begin with the raw amino-acid sequence, 475 residues long: uncharacterized protein (475 aa).

A helical membrane pass occupies residues 19–39; it reads IKVGVFFVAILLILTGILLTI. Disordered stretches follow at residues 55-79 and 330-350; these read GEYH…NATS and SSPF…PHKG. The span at 60–79 shows a compositional bias: polar residues; the sequence is LNTSPNENSTALQPDENATS. Positions 336–348 are enriched in basic residues; sequence NRRHPVTGRIRPH. His-348 serves as a coordination point for Zn(2+).

This sequence in the central section; belongs to the OapA family. It in the C-terminal section; belongs to the peptidase M23B family. Requires Zn(2+) as cofactor.

Its subcellular location is the cell membrane. This is an uncharacterized protein from Haemophilus influenzae (strain ATCC 51907 / DSM 11121 / KW20 / Rd).